A 235-amino-acid polypeptide reads, in one-letter code: Nitrile hydratase subunit beta (235 aa).

This sequence belongs to the nitrile hydratase subunit beta family. In terms of assembly, heterodimer of an alpha and a beta chain.

It catalyses the reaction an aliphatic primary amide = an aliphatic nitrile + H2O. In terms of biological role, NHase catalyzes the hydration of various nitrile compounds to the corresponding amides. This is Nitrile hydratase subunit beta (nthB) from Rhodococcus sp.